The chain runs to 250 residues: 3-deoxy-manno-octulosonate cytidylyltransferase (250 aa).

Belongs to the KdsB family.

The protein localises to the cytoplasm. It catalyses the reaction 3-deoxy-alpha-D-manno-oct-2-ulosonate + CTP = CMP-3-deoxy-beta-D-manno-octulosonate + diphosphate. Its pathway is nucleotide-sugar biosynthesis; CMP-3-deoxy-D-manno-octulosonate biosynthesis; CMP-3-deoxy-D-manno-octulosonate from 3-deoxy-D-manno-octulosonate and CTP: step 1/1. It participates in bacterial outer membrane biogenesis; lipopolysaccharide biosynthesis. Activates KDO (a required 8-carbon sugar) for incorporation into bacterial lipopolysaccharide in Gram-negative bacteria. The sequence is that of 3-deoxy-manno-octulosonate cytidylyltransferase from Yersinia enterocolitica serotype O:8 / biotype 1B (strain NCTC 13174 / 8081).